Consider the following 340-residue polypeptide: MGKSLLAAYGLWALGGPLGLYHIYLGRDSHALLWMLTLGGFGMGWMWDFWKIPIHVYKYNRQERKNIEVKEGEPPASPIRFIGQVATGIYFGIVAAIGLSFLSSFHMVVLPLAVALGVHLVATVGEQTSDLKNTLIAAFLTSPIFYGRAVSMIPISLTASITSQKHMRYRLQQEKQEKLSLRLYRIGLVYLAFTGPLAYSALLNTSLTVSYVAGSIGSMLEWLSIFPSISALVERLLLLPYRVWAVFSGGGVFRDHYFKEWEKIYEFVATFQSEKEEMACKVLGVNFKSTMEEINRKYRELVKIWHPDHNRHRLEEAQEHFLEIQAAYETLMRLRKSKTL.

The region spanning 1–50 (MGKSLLAAYGLWALGGPLGLYHIYLGRDSHALLWMLTLGGFGMGWMWDFW) is the TM2 domain. 7 helical membrane-spanning segments follow: residues 5–25 (LLAAYGLWALGGPLGLYHIYL), 30–50 (HALLWMLTLGGFGMGWMWDFW), 81–101 (FIGQVATGIYFGIVAAIGLSF), 105–125 (FHMVVLPLAVALGVHLVATVG), 135–155 (LIAAFLTSPIFYGRAVSMIPI), 186–206 (IGLVYLAFTGPLAYSALLNTS), and 212–232 (VAGSIGSMLEWLSIFPSISAL). The J domain occupies 278-340 (MACKVLGVNF…LMRLRKSKTL (63 aa)).

Its subcellular location is the membrane. In terms of biological role, may function as a co-chaperone. This Xenopus tropicalis (Western clawed frog) protein is DnaJ homolog subfamily C member 22 (dnajc22).